A 216-amino-acid polypeptide reads, in one-letter code: Uracil phosphoribosyltransferase (216 aa).

Residues arginine 85, arginine 110, and 135–143 (DPMVATGYS) contribute to the 5-phospho-alpha-D-ribose 1-diphosphate site. Residues isoleucine 200 and 205-207 (GDA) each bind uracil. Aspartate 206 is a 5-phospho-alpha-D-ribose 1-diphosphate binding site.

The protein belongs to the UPRTase family. It depends on Mg(2+) as a cofactor.

It catalyses the reaction UMP + diphosphate = 5-phospho-alpha-D-ribose 1-diphosphate + uracil. It participates in pyrimidine metabolism; UMP biosynthesis via salvage pathway; UMP from uracil: step 1/1. Allosterically activated by GTP. Catalyzes the conversion of uracil and 5-phospho-alpha-D-ribose 1-diphosphate (PRPP) to UMP and diphosphate. This Paraburkholderia xenovorans (strain LB400) protein is Uracil phosphoribosyltransferase.